Reading from the N-terminus, the 89-residue chain is Small ribosomal subunit protein uS15 (89 aa).

This sequence belongs to the universal ribosomal protein uS15 family. In terms of assembly, part of the 30S ribosomal subunit. Forms a bridge to the 50S subunit in the 70S ribosome, contacting the 23S rRNA.

Its function is as follows. One of the primary rRNA binding proteins, it binds directly to 16S rRNA where it helps nucleate assembly of the platform of the 30S subunit by binding and bridging several RNA helices of the 16S rRNA. Functionally, forms an intersubunit bridge (bridge B4) with the 23S rRNA of the 50S subunit in the ribosome. The chain is Small ribosomal subunit protein uS15 from Streptococcus suis (strain 98HAH33).